The chain runs to 223 residues: Voltage-dependent calcium channel gamma-1 subunit (223 aa).

The Cytoplasmic segment spans residues methionine 1–arginine 10. The chain crosses the membrane as a helical span at residues valine 11–threonine 29. Residues aspartate 30–alanine 109 are Extracellular-facing. N-linked (GlcNAc...) asparagine glycans are attached at residues asparagine 43 and asparagine 80. A disulfide bridge links cysteine 57 with cysteine 81. The helical transmembrane segment at alanine 110–phenylalanine 130 threads the bilayer. Over glycine 131–aspartate 135 the chain is Cytoplasmic. Residues tyrosine 136–valine 156 form a helical membrane-spanning segment. Residues glutamate 157–serine 180 lie on the Extracellular side of the membrane. A helical transmembrane segment spans residues tryptophan 181–leucine 205. Residues proline 206–histidine 223 are Cytoplasmic-facing.

Belongs to the PMP-22/EMP/MP20 family. CACNG subfamily. Component of a calcium channel complex consisting of a pore-forming alpha subunit (CACNA1S) and the ancillary subunits CACNB1 or CACNB2, CACNG1 and CACNA2D1. The channel complex contains alpha, beta, gamma and delta subunits in a 1:1:1:1 ratio, i.e. it contains either CACNB1 or CACNB2. In terms of processing, N-glycosylated. Detected in skeletal muscle (at protein level).

The protein localises to the cell membrane. Its subcellular location is the sarcolemma. In terms of biological role, regulatory subunit of the voltage-gated calcium channel that gives rise to L-type calcium currents in skeletal muscle. Regulates channel inactivation kinetics. This Mus musculus (Mouse) protein is Voltage-dependent calcium channel gamma-1 subunit (Cacng1).